The primary structure comprises 461 residues: Elongation factor 1-alpha, oocyte form (461 aa).

Glycine 2 bears the N,N,N-trimethylglycine mark. Residues 5–242 form the tr-type G domain; that stretch reads KIHINIVVIG…DCIIPPQRPT (238 aa). Residues 14 to 21 form a G1 region; the sequence is GHVDSGKS. 14–21 provides a ligand contact to GTP; the sequence is GHVDSGKS. Positions 70–74 are G2; sequence GITID. The tract at residues 91-94 is G3; that stretch reads DAPG. GTP contacts are provided by residues 91–95 and 153–156; these read DAPGH and NKMD. Residues 153 to 156 form a G4 region; the sequence is NKMD. The tract at residues 194–196 is G5; that stretch reads SGW. 5-glutamyl glycerylphosphorylethanolamine is present on residues glutamate 301 and glutamate 374.

This sequence belongs to the TRAFAC class translation factor GTPase superfamily. Classic translation factor GTPase family. EF-Tu/EF-1A subfamily. As to expression, oocyte.

The protein localises to the cytoplasm. This protein promotes the GTP-dependent binding of aminoacyl-tRNA to the A-site of ribosomes during protein biosynthesis. The sequence is that of Elongation factor 1-alpha, oocyte form from Xenopus laevis (African clawed frog).